A 123-amino-acid polypeptide reads, in one-letter code: UPF0102 protein CLJ_B2665 (123 aa).

It belongs to the UPF0102 family.

The polypeptide is UPF0102 protein CLJ_B2665 (Clostridium botulinum (strain 657 / Type Ba4)).